A 387-amino-acid chain; its full sequence is Succinate--CoA ligase [ADP-forming] subunit beta (387 aa).

One can recognise an ATP-grasp domain in the interval 9–244; it reads KQLFASYGLP…VSQEDDRENR (236 aa). ATP contacts are provided by residues lysine 46, 53-55, glutamate 99, cysteine 102, and glutamate 107; that span reads GRG. Residues asparagine 199 and aspartate 213 each contribute to the Mg(2+) site. Substrate-binding positions include asparagine 264 and 321-323; that span reads GIV.

The protein belongs to the succinate/malate CoA ligase beta subunit family. In terms of assembly, heterotetramer of two alpha and two beta subunits. Mg(2+) is required as a cofactor.

The enzyme catalyses succinate + ATP + CoA = succinyl-CoA + ADP + phosphate. It carries out the reaction GTP + succinate + CoA = succinyl-CoA + GDP + phosphate. Its pathway is carbohydrate metabolism; tricarboxylic acid cycle; succinate from succinyl-CoA (ligase route): step 1/1. Functionally, succinyl-CoA synthetase functions in the citric acid cycle (TCA), coupling the hydrolysis of succinyl-CoA to the synthesis of either ATP or GTP and thus represents the only step of substrate-level phosphorylation in the TCA. The beta subunit provides nucleotide specificity of the enzyme and binds the substrate succinate, while the binding sites for coenzyme A and phosphate are found in the alpha subunit. The polypeptide is Succinate--CoA ligase [ADP-forming] subunit beta (Legionella pneumophila (strain Corby)).